Consider the following 233-residue polypeptide: Large ribosomal subunit protein uL1 (233 aa).

This sequence belongs to the universal ribosomal protein uL1 family. Part of the 50S ribosomal subunit.

Its function is as follows. Binds directly to 23S rRNA. The L1 stalk is quite mobile in the ribosome, and is involved in E site tRNA release. Functionally, protein L1 is also a translational repressor protein, it controls the translation of the L11 operon by binding to its mRNA. In Thermotoga petrophila (strain ATCC BAA-488 / DSM 13995 / JCM 10881 / RKU-1), this protein is Large ribosomal subunit protein uL1.